Reading from the N-terminus, the 262-residue chain is 7alpha-hydroxysteroid dehydrogenase (262 aa).

NADP(+) is bound by residues 13–18 (SSTRGI), R38, 63–64 (NA), and N90. Taurochenodeoxycholate contacts are provided by T145 and Y158. Residues Y158, K162, and 191–195 (IGTRA) each bind NADP(+). Catalysis depends on Y158, which acts as the Proton acceptor.

Belongs to the short-chain dehydrogenases/reductases (SDR) family. Homotetramer. A dynamic equilibrium between dimers and tetramers seems to exist.

It carries out the reaction cholate + NADP(+) = 3alpha,12alpha-dihydroxy-7-oxo-5beta-cholanate + NADPH + H(+). The enzyme catalyses chenodeoxycholate + NADP(+) = 7-oxolithocholate + NADPH + H(+). It catalyses the reaction 3alpha,7alpha-dihydroxy-12-oxo-5beta-cholanate + NADP(+) = 7,12-dioxo-lithocholate + NADPH + H(+). The catalysed reaction is 7alpha-hydroxy-3,12-dioxo-5beta-cholanate + NADP(+) = dehydrocholate + NADPH + H(+). It carries out the reaction glycochenodeoxycholate + NADP(+) = 7-oxoglycolithocholate + NADPH + H(+). The enzyme catalyses taurochenodeoxycholate + NADP(+) = 7-oxotaurolithocholate + NADPH + H(+). With respect to regulation, activated by metal ions such as Mg(2+), Na(+) and K(+). In terms of biological role, 7alpha-hydroxysteroid dehydrogenase that catalyzes the NADP(+)-dependent oxidation of the 7alpha-hydroxy group of 7alpha-hydroxysteroids, such as cholate, chenodeoxycholate, glycochenodeoxycholate and taurochenodeoxycholate, to the corresponding 7-oxosteroids. Is also able to catalyze the reverse reduction reactions. Together with 7beta-HSDH encoded in the adjacent gene, is likely involved in the epimerization of the hydroxy group at C-7 of primary bile acids through 7-keto bile acid intermediates. This chain is 7alpha-hydroxysteroid dehydrogenase, found in Clostridium sardiniense (Clostridium absonum).